The sequence spans 584 residues: Extracellular serine/threonine protein kinase FAM20C (584 aa).

The Cytoplasmic segment spans residues 1–10 (MKMMLVRRFR). Residues 1–92 (MKMMLVRRFR…PNKHTLRILQ (92 aa)) constitute a propeptide that is removed on maturation. The helical; Signal-anchor for type II membrane protein transmembrane segment at 11–31 (VLILMVFLVACALHIALDLLP) threads the bilayer. Topologically, residues 32–584 (RLERRGARPS…DTEHRAASAR (553 aa)) are lumenal. Disordered regions lie at residues 62–81 (QVRGRPGEPPAASSAAGDAG) and 94–159 (FSSD…GDAS). 2 stretches are compositionally biased toward low complexity: residues 71–81 (PAASSAAGDAG) and 95–112 (SSDPSSNLSSHSLEKLPP). Asparagine 101 carries an N-linked (GlcNAc...) asparagine glycan. Serine 106 carries the post-translational modification Phosphoserine. The segment covering 116–149 (PAERALRGRDPGALRPHDPAHRPLLRDPGPRRSE) has biased composition (basic and acidic residues). Positions 269, 285, and 306 each coordinate ATP. Residue glutamate 306 coordinates Mn(2+). Asparagine 335 carries an N-linked (GlcNAc...) asparagine glycan. Residues 354 to 565 (FISPANNICF…AVRDCVERNG (212 aa)) are kinase domain. 2 cysteine pairs are disulfide-bonded: cysteine 362/cysteine 378 and cysteine 367/cysteine 371. 389-392 (AAFL) is an ATP binding site. Cystine bridges form between cysteine 426-cysteine 500 and cysteine 501-cysteine 560. Aspartate 458 is an active-site residue. ATP is bound at residue glutamate 463. Asparagine 470 carries an N-linked (GlcNAc...) asparagine glycan. Aspartate 478 is an ATP binding site. Aspartate 478 serves as a coordination point for Mn(2+).

The protein belongs to the FAM20 family. Homodimer; disulfide-linked. Interacts with FAM20A; probably forming a heterotetramer of 2 subunits of FAM20A and 2 subunits of FAM20C. Interacts with protease MBTPS1/S1P; the interaction results in FAM20C cleavage and secretion. Interacts with COPII components SEC23A and SEC24A; transport of FAM20C from the endoplasmic reticulum to the Golgi is likely to be mediated by COPII vesicles. Requires Mn(2+) as cofactor. In terms of processing, N-glycosylation is required for folding. Post-translationally, autophosphorylated. Propeptide cleavage by MBTPS1/S1P promotes FAM20C secretion and maximal kinase activity which is essential for efficient osteoblast differentiation and biomineralization. Widely expressed.

It is found in the golgi apparatus membrane. Its subcellular location is the secreted. The protein resides in the endoplasmic reticulum. The enzyme catalyses L-seryl-[protein] + ATP = O-phospho-L-seryl-[protein] + ADP + H(+). The catalysed reaction is L-threonyl-[protein] + ATP = O-phospho-L-threonyl-[protein] + ADP + H(+). With respect to regulation, serine/threonine protein kinase activity is increased upon interaction with FAM20A. Functionally, golgi serine/threonine protein kinase that phosphorylates secretory pathway proteins within Ser-x-Glu/pSer motifs and plays a key role in biomineralization of bones and teeth. Constitutes the main protein kinase for extracellular proteins, generating the majority of the extracellular phosphoproteome. Mainly phosphorylates proteins within the Ser-x-Glu/pSer motif, but also displays a broader substrate specificity. Phosphorylates ERO1A, enhancing its activity which is required to maintain endoplasmic reticulum redox homeostasis and for oxidative protein folding. During endoplasmic reticulum stress, phosphorylates P4HB/PDIA1 which induces a functional switch, causing P4HB to change from an oxidoreductase to a molecular chaperone. This is critical to maintain ER proteostasis and reduce cell death under ER stress. Phosphorylation of P4HB also promotes its interaction with ERN1, leading to reduced activity of ERN1, a key sensor for the endoplasmic reticulum unfolded protein response. Required for osteoblast differentiation and mineralization. Phosphorylates casein as well as a number of proteins involved in biomineralization such as AMELX, AMTN, ENAM and SPP1/OPN. In addition to its role in biomineralization, also plays a role in lipid homeostasis, wound healing and cell migration and adhesion. The sequence is that of Extracellular serine/threonine protein kinase FAM20C from Homo sapiens (Human).